Reading from the N-terminus, the 456-residue chain is Non-structural protein V (456 aa).

The tract at residues 53–92 is disordered; sequence SGESEQVEGGMSKDDGDVERRNLEDLSSTSPTDGTIGKRV. The span at 63–76 shows a compositional bias: basic and acidic residues; it reads MSKDDGDVERRNLE. Serine 257 is modified (phosphoserine; by host). A disordered region spans residues 265 to 324; it reads ISPEDEEPSSVGGKPNESIGRTIEGQSIRDNLQAKDNKSTDVPGAGPKDSAVKEEPPQKR. Position 350 is a phosphoserine; by host (serine 350). Zn(2+) is bound by residues histidine 408, cysteine 427, cysteine 431, cysteine 443, cysteine 445, cysteine 448, cysteine 452, and cysteine 455.

This sequence belongs to the paramyxoviruses V protein family. Interacts with host IFIH1/MDA5, DHX58/LGP2, STAT1 and STAT2. Interacts (via N-terminus) with host UBXN1 (via C-terminal UBX domain); this interaction inhibits interferon-alpha/beta (IFN-alpha/beta) production. Interacts with host RIGI regulatory protein (via CARDs domain) and host TRIM25 (via SPRY domain); these interactions prevent TRIM25-mediated ubiquitination of RIG-I and disrupts downstream RIG-I signaling.

It is found in the host cytoplasm. Plays an essential role in the inhibition of host immune response. Prevents the establishment of cellular antiviral state by blocking interferon-alpha/beta (IFN-alpha/beta) production and signaling pathway. Interacts with host IFIH1/MDA5 and DHX58/LGP2 to inhibit the transduction pathway involved in the activation of IFN-beta promoter, thus protecting the virus against cell antiviral state. Blocks the type I interferon signaling pathway by interacting with host STAT1 and STAT2 and thereby inhibiting their phosphorylation and subsequent nuclear translocation. Efficiently blocks the type II interferon signaling pathway. Suppresses interferon induction by interacting with and stabilizing host UBXN1, a negative regulator of both RIG-I-like receptors (RLR) and NF-kappa-B pathways. Blocks the type I interferon signaling pathway by disrupting the RIG-I signaling pathway. The polypeptide is Non-structural protein V (P/V/C) (Cynopterus brachyotis (Lesser short-nosed fruit bat)).